Reading from the N-terminus, the 1045-residue chain is 3-hydroxy-3-methylglutaryl-coenzyme A reductase 2 (1045 aa).

At 1–24 the chain is on the cytoplasmic side; the sequence is MSLPLKTIVHLVKPFACTARFSAR. The helical transmembrane segment at 25 to 45 threads the bilayer; sequence YPIHVIVVAVLLSAAAYLSVT. Over 46–186 the chain is Lumenal; it reads QSYLNEWKLD…FSNKTSEFDQ (141 aa). N-linked (GlcNAc...) asparagine glycans are attached at residues asparagine 115, asparagine 150, asparagine 158, and asparagine 179. Residues 187–207 form a helical membrane-spanning segment; sequence FDLFIILAAYLTLFYTLCCLF. One can recognise an SSD domain in the interval 188-356; the sequence is DLFIILAAYL…ATFYSAILSM (169 aa). Residues 208-216 are Cytoplasmic-facing; it reads NDMRKIGSK. A helical transmembrane segment spans residues 217–237; that stretch reads FWLSFSALSNSACALYLSLYT. Topologically, residues 238–243 are lumenal; sequence THSLLK. The chain crosses the membrane as a helical span at residues 244 to 264; that stretch reads KPASLLSLVIGLPFIVVIIGF. At 265–301 the chain is on the cytoplasmic side; that stretch reads KHKVRLAAFSLQKFHRISIDKKITVSNIIYEAMFQEG. A helical membrane pass occupies residues 302–322; sequence AYLIRDYLFYISSFIGCAIYA. Residues 323–324 lie on the Lumenal side of the membrane; it reads RH. Residues 325–345 traverse the membrane as a helical segment; the sequence is LPGLVNFCILSTFMLVFDLLL. At 346–402 the chain is on the cytoplasmic side; the sequence is SATFYSAILSMKLEINIIHRSTVIRQTLEEDGVVPTTADIIYKDETASEPHFLRSNV. Residues 403 to 423 traverse the membrane as a helical segment; sequence AIILGKASVIGLLLLINLYVF. The Lumenal segment spans residues 424–497; sequence TDKLNATILN…DSVSNAIRDQ (74 aa). N-linked (GlcNAc...) asparagine glycans are attached at residues asparagine 428 and asparagine 455. The chain crosses the membrane as a helical span at residues 498–518; the sequence is FISKLLFFAFAVSISINVYLL. The Cytoplasmic segment spans residues 519-1045; the sequence is NAAKIHTGYM…GPPCKTSALL (527 aa). Residue threonine 565 is modified to Phosphothreonine. Glutamate 710 acts as the Charge relay system in catalysis. 716-722 is a binding site for CoA; the sequence is SAMRGCK. Residues 777–779 and 804–812 each bind NADP(+); these read SRF and DAMGMNMIS. Lysine 844 acts as the Charge relay system in catalysis. Residue 873–875 coordinates CoA; sequence VLK. The active-site Charge relay system is aspartate 920. 1015–1016 contacts CoA; that stretch reads SH. Histidine 1016 functions as the Proton donor in the catalytic mechanism. The segment at 1018–1045 is disordered; the sequence is THNRKTNKANELPQPSNKGPPCKTSALL. 1020–1021 is an NADP(+) binding site; the sequence is NR.

It belongs to the HMG-CoA reductase family.

It is found in the endoplasmic reticulum membrane. The protein localises to the nucleus envelope. It catalyses the reaction (R)-mevalonate + 2 NADP(+) + CoA = (3S)-3-hydroxy-3-methylglutaryl-CoA + 2 NADPH + 2 H(+). The protein operates within metabolic intermediate biosynthesis; (R)-mevalonate biosynthesis; (R)-mevalonate from acetyl-CoA: step 3/3. Functionally, HMG-CoA reductase; part of the first module of ergosterol biosynthesis pathway constitutes by the early steps of the pathway, conserved across all eukaryotes, and which results in the formation of mevalonate from acetyl-coenzyme A (acetyl-CoA). HMG1 and HMG2 catalyze the reduction of hydroxymethylglutaryl-CoA (HMG-CoA) to mevalonate that is the rate-limiting step within the first mosule. The first module starts with the action of the cytosolic acetyl-CoA acetyltransferase ERG10 that catalyzes the formation of acetoacetyl-CoA. The hydroxymethylglutaryl-CoA synthase ERG13 then condenses acetyl-CoA with acetoacetyl-CoA to form HMG-CoA. The rate-limiting step of the early module is the reduction to mevalonate by the 3-hydroxy-3-methylglutaryl-coenzyme A (HMG-CoA) reductases HMG1 and HMG2 which are derived from a single ancestral HMGR gene by gene duplication. In Saccharomyces cerevisiae (strain ATCC 204508 / S288c) (Baker's yeast), this protein is 3-hydroxy-3-methylglutaryl-coenzyme A reductase 2.